A 235-amino-acid chain; its full sequence is Small ribosomal subunit protein uS3 (235 aa).

One can recognise a KH type-2 domain in the interval 39–107; sequence VRQFLNKELA…PAQINIAEVK (69 aa). Positions 216 to 235 are disordered; sequence QPEQQPTDKPKKVPRGKGRK.

The protein belongs to the universal ribosomal protein uS3 family. As to quaternary structure, part of the 30S ribosomal subunit. Forms a tight complex with proteins S10 and S14.

In terms of biological role, binds the lower part of the 30S subunit head. Binds mRNA in the 70S ribosome, positioning it for translation. In Aggregatibacter actinomycetemcomitans (Actinobacillus actinomycetemcomitans), this protein is Small ribosomal subunit protein uS3.